We begin with the raw amino-acid sequence, 1016 residues long: Formate dehydrogenase-O major subunit (1016 aa).

A signal peptide (tat-type signal) is located at residues 1-33; it reads MQVSRRQFFKICAGGMAGTTAAALGFAPSVALA. A 4Fe-4S Mo/W bis-MGD-type domain is found at 43-106; sequence TRETRNTCTY…GLVDFIHSES (64 aa). Cys50, Cys53, Cys57, and Cys92 together coordinate [4Fe-4S] cluster. Sec196 is a non-standard amino acid (selenocysteine).

This sequence belongs to the prokaryotic molybdopterin-containing oxidoreductase family. In terms of assembly, formate dehydrogenase is a membrane-bound complex, formed by subunits alpha, beta and gamma. Mo-bis(molybdopterin guanine dinucleotide) is required as a cofactor. It depends on [4Fe-4S] cluster as a cofactor. Exported by the Tat system. The position of the signal peptide cleavage has not been experimentally proven.

Its subcellular location is the periplasm. It catalyses the reaction formate + NAD(+) = CO2 + NADH. Allows to use formate as major electron donor during aerobic respiration. Subunit alpha possibly forms the active site. The chain is Formate dehydrogenase-O major subunit (fdoG) from Escherichia coli (strain K12).